Here is a 734-residue protein sequence, read N- to C-terminus: Photosystem I P700 chlorophyll a apoprotein A2 (734 aa).

8 helical membrane passes run 46–69 (IFASHFGQLAIIFLWTSGNLFHVA), 135–158 (LYTGALFLFLISAISLIAGWLHLQ), 175–199 (LNHHLAGLFGVSSLAWTGHLVHVAI), 273–291 (IAHHHLAITLLFFVAGHMY), 330–353 (LHFQLGLALASLGVFTSLVAQHMY), 369–395 (AALYAHHQYIAGFIMTGAFAHGAIFFI), 417–439 (AIISHLSWVSLFLGFHTLGLYIH), and 517–535 (FLVHHAIALGLHTTTLILV). The [4Fe-4S] cluster site is built by C559 and C568. The next 2 helical transmembrane spans lie at 575–596 (AFYLAVFWMLNTIGWVTFYWHW) and 643–665 (LSVWAWMFLFGHLVWATGFMFLI). Positions 654, 662, and 670 each coordinate chlorophyll a. Residue W671 participates in phylloquinone binding. The chain crosses the membrane as a helical span at residues 707 to 727 (FVGLAHFSVGYIFTYAAFLIA).

Belongs to the PsaA/PsaB family. In terms of assembly, the PsaA/B heterodimer binds the P700 chlorophyll special pair and subsequent electron acceptors. PSI consists of a core antenna complex that captures photons, and an electron transfer chain that converts photonic excitation into a charge separation. The eukaryotic PSI reaction center is composed of at least 11 subunits. It depends on P700 is a chlorophyll a/chlorophyll a' dimer, A0 is one or more chlorophyll a, A1 is one or both phylloquinones and FX is a shared 4Fe-4S iron-sulfur center. as a cofactor.

It localises to the plastid membrane. It catalyses the reaction reduced [plastocyanin] + hnu + oxidized [2Fe-2S]-[ferredoxin] = oxidized [plastocyanin] + reduced [2Fe-2S]-[ferredoxin]. Its function is as follows. PsaA and PsaB bind P700, the primary electron donor of photosystem I (PSI), as well as the electron acceptors A0, A1 and FX. PSI is a plastocyanin-ferredoxin oxidoreductase, converting photonic excitation into a charge separation, which transfers an electron from the donor P700 chlorophyll pair to the spectroscopically characterized acceptors A0, A1, FX, FA and FB in turn. Oxidized P700 is reduced on the lumenal side of the thylakoid membrane by plastocyanin. In Cuscuta sandwichiana (Kauna'oa), this protein is Photosystem I P700 chlorophyll a apoprotein A2.